A 485-amino-acid chain; its full sequence is Arginine biosynthesis bifunctional protein ArgJ, mitochondrial (485 aa).

Substrate is bound by residues Thr-185, Lys-214, Thr-225, and Glu-315. Catalysis depends on Thr-225, which acts as the Nucleophile.

This sequence belongs to the ArgJ family. Heterodimer of an alpha and a beta chain. The alpha and beta chains are autoproteolytically processed from a single precursor protein within the mitochondrion.

Its subcellular location is the mitochondrion matrix. The enzyme catalyses N(2)-acetyl-L-ornithine + L-glutamate = N-acetyl-L-glutamate + L-ornithine. It catalyses the reaction L-glutamate + acetyl-CoA = N-acetyl-L-glutamate + CoA + H(+). Its pathway is amino-acid biosynthesis; L-arginine biosynthesis; L-ornithine and N-acetyl-L-glutamate from L-glutamate and N(2)-acetyl-L-ornithine (cyclic): step 1/1. It participates in amino-acid biosynthesis; L-arginine biosynthesis; N(2)-acetyl-L-ornithine from L-glutamate: step 1/4. Functionally, catalyzes two activities which are involved in the cyclic version of arginine biosynthesis: the synthesis of acetylglutamate from glutamate and acetyl-CoA, and of ornithine by transacetylation between acetylornithine and glutamate. This chain is Arginine biosynthesis bifunctional protein ArgJ, mitochondrial, found in Penicillium rubens (strain ATCC 28089 / DSM 1075 / NRRL 1951 / Wisconsin 54-1255) (Penicillium chrysogenum).